Reading from the N-terminus, the 279-residue chain is Dehydrogenase/reductase SDR family member 4 (279 aa).

37–61 (LVTASTDGIGLAIARRLAEDGAHVV) contributes to the NADP(+) binding site. Residue lysine 93 is modified to N6-acetyllysine; alternate. N6-succinyllysine; alternate is present on lysine 93. Lysine 106 is modified (N6-acetyllysine). Serine 170 is a substrate binding site. Tyrosine 183 functions as the Proton acceptor in the catalytic mechanism. Lysine 187 provides a ligand contact to NADP(+). Lysine 217 is modified (N6-acetyllysine; alternate). Position 217 is an N6-succinyllysine; alternate (lysine 217). Position 221 is a phosphoserine (serine 221). N6-succinyllysine is present on residues lysine 228 and lysine 235. The short motif at 277 to 279 (SRL) is the Peroxisomal targeting signal element.

It belongs to the short-chain dehydrogenases/reductases (SDR) family. Homotetramer.

The protein localises to the peroxisome. The enzyme catalyses a secondary alcohol + NADP(+) = a ketone + NADPH + H(+). It carries out the reaction 3alpha-hydroxy-5beta-pregnan-20-one + NADP(+) = 5beta-pregnan-3,20-dione + NADPH + H(+). It catalyses the reaction 5beta-dihydrotestosterone + NADPH + H(+) = 5beta-androstane-3alpha,17beta-diol + NADP(+). The catalysed reaction is all-trans-retinol + NADP(+) = all-trans-retinal + NADPH + H(+). The enzyme catalyses isatin + NADPH + H(+) = 3-hydroxyindolin-2-one + NADP(+). Its function is as follows. NADPH-dependent oxidoreductase which catalyzes the reduction of a variety of compounds bearing carbonyl groups including ketosteroids, alpha-dicarbonyl compounds, aldehydes, aromatic ketones and quinones. Reduces all-trans-retinal and 9-cis retinal. Reduces 3-ketosteroids and benzil into 3alpha-hydroxysteroids and S-benzoin, respectively, in contrast to the stereoselectivity of primates DHRS4s which produce 3beta-hydroxysteroids and R-benzoin. In the reverse reaction, catalyzes the NADP-dependent oxidation of 3alpha-hydroxysteroids and alcohol, but with much lower efficiency. Involved in the metabolism of 3alpha-hydroxysteroids, retinoid, isatin and xenobiotic carbonyl compounds. This Rattus norvegicus (Rat) protein is Dehydrogenase/reductase SDR family member 4 (Dhrs4).